The primary structure comprises 442 residues: Methionine aminopeptidase 2-1 (442 aa).

Residues 1–92 (MAAQASEELE…ISELFPNNQY (92 aa)) are disordered. Positions 15 to 25 (NGQNGHAQEQV) are enriched in polar residues. The segment covering 30–47 (EAADNDDSEDDEKEEEGG) has biased composition (acidic residues). Residues 56–72 (AKKKKKRKPKKKKKGGA) are compositionally biased toward basic residues. His-195 contributes to the substrate binding site. The a divalent metal cation site is built by Asp-215, Asp-226, and His-295. Residue His-303 participates in substrate binding. Glu-328 and Glu-423 together coordinate a divalent metal cation.

It belongs to the peptidase M24A family. Methionine aminopeptidase eukaryotic type 2 subfamily. Co(2+) serves as cofactor. The cofactor is Zn(2+). Requires Mn(2+) as cofactor. It depends on Fe(2+) as a cofactor.

The protein localises to the cytoplasm. The enzyme catalyses Release of N-terminal amino acids, preferentially methionine, from peptides and arylamides.. Functionally, cotranslationally removes the N-terminal methionine from nascent proteins. The N-terminal methionine is often cleaved when the second residue in the primary sequence is small and uncharged (Met-Ala-, Cys, Gly, Pro, Ser, Thr, or Val). In Talaromyces marneffei (strain ATCC 18224 / CBS 334.59 / QM 7333) (Penicillium marneffei), this protein is Methionine aminopeptidase 2-1.